The chain runs to 1940 residues: MSSDTEMEVFGIAAPFLRKSEKERIEAQNQPFDAKTYCFVVDSKEEYVKGKIKSSQDGKVTVETEDSRTLVVKPEDVYAMNPPKFDKIEDMAMLTHLNEPAVLYNLKDRYTSWMIYTYSGLFCVTVNPYKWLPVYNPEVVDGYRGKKRQEAPPHIFSISDNAYQFMLTDRENQSILITGESGAGKTVNTKRVIQYFATIAATGDLAKKKDSKMKGTLEDQIISANPLLEAFGNAKTVRNDNSSRFGKFIRIHFGTTGKLASADIETYLLEKSRVTFQLKAERSYHIFYQILSNKKPELIELLLITTNPYDYPFISQGEILVASIDDAEELLATDSAIDILGFTPEEKSGLYKLTGAVMHYGNMKFKQKQREEQAEPDGTEVADKTAYLMGLNSSDLLKALCFPRVKVGNEYVTKGQTVDQVHHAVNALSKSVYEKLFLWMVTRINQQLDTKLPRQHFIGVLDIAGFEIFEYNSLEQLCINFTNEKLQQFFNHHMFVLEQEEYKKEGIEWTFIDFGMDLAACIELIEKPMGIFSILEEECMFPKATDTSFKNKLYDQHLGKSNNFQKPKVVKGKAEAHFSLVHYAGTVDYSVSGWLEKNKDPLNETVVGLYQKSSNRLLAHLYATFATTDADGGKKKVAKKKGSSFQTVSALFRENLNKLMSNLRTTHPHFVRCIIPNETKTPGAMEHSLVLHQLRCNGVLEGIRICRKGFPNRILYGDFKQRYRVLNASAIPEGQFIDSKKACEKLLASIDIDHTQYKFGHTKVFFKAGLLGTLEEMRDERLAKLITRTQAVCRGFLMRVEFQKMMQRRESIFCIQYNIRAFMNVKHWPWMKLFFKIKPLLKSAETEKEMATMKEEFQKTKDELAKSEAKRKELEEKLVTLVQEKNDLQLQVQAESENLLDAEERCDQLIKAKFQLEAKIKEVTERAEDEEEINAELTAKKRKLEDECSELKKDIDDLELTLAKVEKEKHATENKVKNLTEELAGLDETIAKLTREKKALQEAHQQTLDDLQAEEDKVNSLSKLKSKLEQQVDDLESSLEQEKKLRVDLERNKRKLEGDLKLAQESILDLENDKQQLDERLKKKDFEYSQLQSKVEDEQTLSLQLQKKIKELQARIEELEEEIEAERATRAKTEKQRSDYARELEELSERLEEAGGVTSTQIELNKKREAEFLKLRRDLEEATLQHEATVATLRKKHADSAAELAEQIDNLQRVKQKLEKEKSEFKLEIDDLSSSVESVSKSKANLEKICRTLEDQLSEARGKNEEMQRSLSELTTQKSRLQTEAGELSRQLEEKESIVSQLSRSKQAFTQQIEELKRQLEEENKAKNALAHALQSSRHDCDLLREQYEEEQEGKAELQRALSKANSEVAQWRTKYETDAIQRTEELEEAKKKLAQRLQDSEEQVEAVNAKCASLEKTKQRLQGEVEDLMVDVERANSLAAALDKKQRNFDKVLAEWKTKCEESQAELEAALKESRSLSTELFKLKNAYEEALDQLETVKRENKNLEQEIADLTEQIAENGKSIHELEKSRKQMELEKADIQMALEEAEAALEHEEAKILRIQLELTQVKSEIDRKIAEKDEEIEQLKRNYQRTVETMQGALDAEVRSRNEAIRLKKKMEGDLNEIEIQLSHANRQAAETIKHLRSVQGQLKDTQLHLDDALRGQEDLKEQLAIVERRANLLQAEVEELRATLEQTERARKLAEQELLDSNERVQLLHTQNTSLIHTKKKLETDLTQLQSEVEDACRDARNAEEKAKKAITDAAMMAEELKKEQDTSAHLERMKKNLEQTVKDLQHRLDEAEQLALKGGKKQIQKLETRIRELEFELEGEQKRNTESVKGLRKYERRVKELTYQSEEDRKNVLRLQDLVDKLQVKVKSYKRQAEEADEQANAHLTKFRKAQHELEEAEERADIAESQVNKLRAKTRDFTSSRMVVHESEE.

Residues 33–82 enclose the Myosin N-terminal SH3-like domain; that stretch reads DAKTYCFVVDSKEEYVKGKIKSSQDGKVTVETEDSRTLVVKPEDVYAMNP. Residues 86–779 enclose the Myosin motor domain; that stretch reads DKIEDMAMLT…LLGTLEEMRD (694 aa). The residue at position 130 (K130) is an N6,N6,N6-trimethyllysine. 179-186 lines the ATP pocket; that stretch reads GESGAGKT. Actin-binding stretches follow at residues 656–678 and 758–772; these read LNKLMSNLRTTHPHFVRCIIPNE and KFGHTKVFFKAGLLG. Positions 782–811 constitute an IQ domain; that stretch reads LAKLITRTQAVCRGFLMRVEFQKMMQRRES. Residues 841–1928 adopt a coiled-coil conformation; sequence LKSAETEKEM…NKLRAKTRDF (1088 aa). A disordered region spans residues 1260–1289; sequence ARGKNEEMQRSLSELTTQKSRLQTEAGELS. The span at 1269–1282 shows a compositional bias: polar residues; the sequence is RSLSELTTQKSRLQ.

Belongs to the TRAFAC class myosin-kinesin ATPase superfamily. Myosin family. In terms of assembly, muscle myosin is a hexameric protein that consists of 2 heavy chain subunits (MHC), 2 alkali light chain subunits (MLC) and 2 regulatory light chain subunits (MLC-2).

It localises to the cytoplasm. The protein resides in the myofibril. Functionally, muscle contraction. The sequence is that of Myosin-3 (Myh3) from Mus musculus (Mouse).